Reading from the N-terminus, the 613-residue chain is Sulfhydryl oxidase 1 (613 aa).

Positions 1-30 (MTGCGRRSGWLPPLRLLLLPLLLGGPGVGA) are cleaved as a signal peptide. A Thioredoxin domain is found at 37–157 (YSASDPLTLL…RERLIDALES (121 aa)). Catalysis depends on nucleophile residues Cys-71 and Cys-74. 2 disulfide bridges follow: Cys-71/Cys-74 and Cys-102/Cys-111. Residues Asn-131 and Asn-244 are each glycosylated (N-linked (GlcNAc...) asparagine). A disulfide bridge links Cys-394 with Cys-406. The ERV/ALR sulfhydryl oxidase domain occupies 397–504 (SESHFRGFPC…EDPQFPKVQW (108 aa)). FAD contacts are provided by Arg-402, Trp-409, and His-413. Ser-427 carries the phosphoserine modification. Residues Cys-450 and Cys-453 are joined by a disulfide bond. FAD-binding positions include Asp-452, His-456, 479-486 (WTSHNRVN), Lys-501, and Trp-504. A disulfide bond links Cys-510 and Cys-513.

Belongs to the quiescin-sulfhydryl oxidase (QSOX) family. Monomer. It depends on FAD as a cofactor. N-glycosylated. O-glycosylated on Thr and Ser residues. In terms of tissue distribution, detected in endometrium and in uterus glandular epithelial cells (at protein level). Expressed in testis, placenta, pancreas, lung, ovary, endometrium, but not in brain, liver and kidney tissues. Higher expression in epithelial cells.

Its subcellular location is the secreted. It carries out the reaction 2 R'C(R)SH + O2 = R'C(R)S-S(R)CR' + H2O2. In terms of biological role, catalyzes the oxidation of sulfhydryl groups in peptide and protein thiols to disulfides with the reduction of oxygen to hydrogen peroxide. Plays a role in disulfide bond formation in a variety of extracellular proteins. In fibroblasts, required for normal incorporation of laminin into the extracellular matrix, and thereby for normal cell-cell adhesion and cell migration. The sequence is that of Sulfhydryl oxidase 1 (QSOX1) from Cavia porcellus (Guinea pig).